Reading from the N-terminus, the 286-residue chain is Small ribosomal subunit protein uS2 (286 aa).

A disordered region spans residues 231–286 (ERAQAEAKAAAGDNDAPVSSEGESTEVASDAASTASETTATSSDESAAESSEAESK). The segment covering 255-280 (TEVASDAASTASETTATSSDESAAES) has biased composition (low complexity).

It belongs to the universal ribosomal protein uS2 family.

This chain is Small ribosomal subunit protein uS2, found in Corynebacterium kroppenstedtii (strain DSM 44385 / JCM 11950 / CIP 105744 / CCUG 35717).